The following is a 540-amino-acid chain: 2-isopropylmalate synthase (540 aa).

One can recognise a Pyruvate carboxyltransferase domain in the interval 8-271; it reads VLIFDTTLRD…NPFFGREEDS (264 aa). Residues aspartate 17, histidine 208, histidine 210, and asparagine 244 each coordinate Mn(2+). The regulatory domain stretch occupies residues 408–540; sequence QLKLVQVSCG…PVVLESRPTL (133 aa).

This sequence belongs to the alpha-IPM synthase/homocitrate synthase family. LeuA type 1 subfamily. As to quaternary structure, homodimer. Mn(2+) is required as a cofactor.

The protein localises to the cytoplasm. It catalyses the reaction 3-methyl-2-oxobutanoate + acetyl-CoA + H2O = (2S)-2-isopropylmalate + CoA + H(+). It participates in amino-acid biosynthesis; L-leucine biosynthesis; L-leucine from 3-methyl-2-oxobutanoate: step 1/4. Functionally, catalyzes the condensation of the acetyl group of acetyl-CoA with 3-methyl-2-oxobutanoate (2-ketoisovalerate) to form 3-carboxy-3-hydroxy-4-methylpentanoate (2-isopropylmalate). This is 2-isopropylmalate synthase from Synechococcus sp. (strain CC9605).